Reading from the N-terminus, the 259-residue chain is DNA-directed RNA polymerase 30 kDa polypeptide (259 aa).

The segment at 155–195 (YNTPCPNCKSRNTTPMMIQTRAADEPPLVRHACRDCKQHFK) adopts a TFIIS-type zinc-finger fold. Cysteine 159, cysteine 162, cysteine 187, and cysteine 190 together coordinate Zn(2+). Residues 220-259 (EILPDNNPSPPESPEPASPIDDGLIRATFDRNDEPPEDDE) form a disordered region. The segment covering 226–236 (NPSPPESPEPA) has biased composition (pro residues).

This sequence belongs to the poxviridae DNA-directed RNA polymerase 30 kDa subunit family. The DNA-dependent RNA polymerase (vRNAP) consists of eight subunits encoded by early viral genes and termed according to their apparent molecular masses Rpo147, Rpo132, Rpo35, Rpo30, Rpo22, Rpo19, Rpo18, and Rpo7. The same holoenzyme, with the addition of the transcription-specificity factor RAP94, is used for early gene expression.

The protein localises to the virion. It is found in the host cytoplasm. It carries out the reaction RNA(n) + a ribonucleoside 5'-triphosphate = RNA(n+1) + diphosphate. Part of the DNA-dependent RNA polymerase which catalyzes the transcription of viral DNA into RNA using the four ribonucleoside triphosphates as substrates. Responsible for the transcription of early, intermediate and late genes. DNA-dependent RNA polymerase associates with the early transcription factor (ETF), itself composed of OPG118 and OPG134, thereby allowing the early genes transcription. Late transcription, and probably also intermediate transcription, require newly synthesized RNA polymerase. This is DNA-directed RNA polymerase 30 kDa polypeptide (OPG066) from Monkeypox virus.